The sequence spans 405 residues: Zinc finger protein ubi-d4 (405 aa).

Disordered stretches follow at residues 80 to 147 (RKKR…GEFP), 165 to 194 (DDLD…GGAR), 210 to 230 (ACDN…VCGK), and 248 to 280 (AEEE…PDGL). Basic and acidic residues-rich tracts occupy residues 100 to 110 (PDTDQTLKKEG) and 126 to 140 (DPLE…RMDD). Positions 165–174 (DDLDDEDYEE) are enriched in acidic residues. A C2H2-type; atypical zinc finger spans residues 209–246 (YACDNSYKQKHSLKPPDRVCGKRYKNRPGLSYHYAHSH). Over residues 267–277 (RSEEQKSKKGP) the composition is skewed to basic and acidic residues. PHD-type zinc fingers lie at residues 284-344 (NNYC…CKCC) and 341-391 (CKCC…CLDL).

It belongs to the requiem/DPF family.

It localises to the cytoplasm. Its subcellular location is the nucleus. In terms of biological role, may be a transcription factor required for the apoptosis response following survival factor withdrawal from myeloid cells. Might also have a role in the development and maturation of lymphoid cells. The chain is Zinc finger protein ubi-d4 (REQ) from Gallus gallus (Chicken).